The following is a 496-amino-acid chain: Glutamyl-tRNA(Gln) amidotransferase subunit A (496 aa).

Residues Lys-75 and Ser-150 each act as charge relay system in the active site. Residue Ser-174 is the Acyl-ester intermediate of the active site.

It belongs to the amidase family. GatA subfamily. As to quaternary structure, heterotrimer of A, B and C subunits.

The enzyme catalyses L-glutamyl-tRNA(Gln) + L-glutamine + ATP + H2O = L-glutaminyl-tRNA(Gln) + L-glutamate + ADP + phosphate + H(+). Functionally, allows the formation of correctly charged Gln-tRNA(Gln) through the transamidation of misacylated Glu-tRNA(Gln) in organisms which lack glutaminyl-tRNA synthetase. The reaction takes place in the presence of glutamine and ATP through an activated gamma-phospho-Glu-tRNA(Gln). This is Glutamyl-tRNA(Gln) amidotransferase subunit A from Burkholderia cenocepacia (strain HI2424).